The sequence spans 164 residues: DNA-binding protein inhibitor ID-1 (164 aa).

Residues 46–98 (LPALLDEQQVNVLLYDMNGCYSRLKELVPTLPQNRKVSKVEILQHVIDYIRDL) enclose the bHLH domain. Positions 91–104 (VIDYIRDLQLELNS) match the Nuclear export signal motif.

As to quaternary structure, heterodimer with other HLH proteins. Interacts with COPS5, IFI204, GATA4, NKX2-5, CLOCK and BMAL1. Isoform Short can form homodimers. Phosphorylated in vitro by PKA and PKC.

It is found in the cytoplasm. It localises to the nucleus. Functionally, transcriptional regulator (lacking a basic DNA binding domain) which negatively regulates the basic helix-loop-helix (bHLH) transcription factors by forming heterodimers and inhibiting their DNA binding and transcriptional activity. Implicated in regulating a variety of cellular processes, including cellular growth, senescence, differentiation, apoptosis, angiogenesis, and neoplastic transformation. Inhibits skeletal muscle and cardiac myocyte differentiation. Regulates the circadian clock by repressing the transcriptional activator activity of the CLOCK-BMAL1 heterodimer. The chain is DNA-binding protein inhibitor ID-1 (Id1) from Rattus norvegicus (Rat).